The chain runs to 190 residues: Proline-rich protein 3 (190 aa).

3 disordered regions span residues 1–94, 110–130, and 142–161; these read MPKR…GLGP, PPFP…KEAR, and KNTY…SDRP. Positions 37-48 are enriched in pro residues; the sequence is MGPPSLLGPPPM. A C3H1-type zinc finger spans residues 157 to 185; it reads KSDRPVCRHFSKKGHCRYEDHCAFYHPGV.

This Mus musculus (Mouse) protein is Proline-rich protein 3 (Prr3).